The primary structure comprises 484 residues: Ureidoglycolate hydrolase (484 aa).

The first 28 residues, 1 to 28, serve as a signal peptide directing secretion; the sequence is MATSAAARFLAALAGAAVLLVLLGGAAG. Positions 148, 159, 194, and 262 each coordinate Mn(2+). Substrate stretches follow at residues 193–194 and 262–265; these read EE and HIEQ. The segment at 284–399 is involved in dimerization; sequence APASIKVEFE…LSEFKIINQD (116 aa). Substrate is bound by residues His298, Asn348, and Arg361. The tract at residues 431 to 432 is substrate; it reads YH. His456 lines the Mn(2+) pocket. His456 is a binding site for substrate.

Belongs to the peptidase M20 family. In terms of assembly, homodimer. Mn(2+) is required as a cofactor. Ni(2+) serves as cofactor. Requires Co(2+) as cofactor.

The protein localises to the endoplasmic reticulum. The enzyme catalyses (S)-ureidoglycolate + H2O + 2 H(+) = glyoxylate + 2 NH4(+) + CO2. It participates in nitrogen metabolism; (S)-allantoin degradation; glyoxylate from (S)-ureidoglycolate: step 1/1. Functionally, involved in the catabolism of purine nucleotides. The sequential activity of AAH, UGLYAH and UAH allows a complete purine breakdown without the intermediate generation of urea. This is Ureidoglycolate hydrolase from Oryza sativa subsp. japonica (Rice).